Consider the following 402-residue polypeptide: Imidazolonepropionase (402 aa).

Fe(3+) is bound by residues His66 and His68. His66 and His68 together coordinate Zn(2+). 4-imidazolone-5-propanoate-binding residues include Arg75, Tyr138, and His171. Position 138 (Tyr138) interacts with N-formimidoyl-L-glutamate. A Fe(3+)-binding site is contributed by His236. A Zn(2+)-binding site is contributed by His236. Gln239 contacts 4-imidazolone-5-propanoate. Asp311 is a binding site for Fe(3+). Position 311 (Asp311) interacts with Zn(2+). The N-formimidoyl-L-glutamate site is built by Asn313 and Gly315. Thr316 is a binding site for 4-imidazolone-5-propanoate.

The protein belongs to the metallo-dependent hydrolases superfamily. HutI family. The cofactor is Zn(2+). It depends on Fe(3+) as a cofactor.

The protein resides in the cytoplasm. It catalyses the reaction 4-imidazolone-5-propanoate + H2O = N-formimidoyl-L-glutamate. It functions in the pathway amino-acid degradation; L-histidine degradation into L-glutamate; N-formimidoyl-L-glutamate from L-histidine: step 3/3. In terms of biological role, catalyzes the hydrolytic cleavage of the carbon-nitrogen bond in imidazolone-5-propanoate to yield N-formimidoyl-L-glutamate. It is the third step in the universal histidine degradation pathway. This is Imidazolonepropionase from Vibrio cholerae serotype O1 (strain ATCC 39541 / Classical Ogawa 395 / O395).